We begin with the raw amino-acid sequence, 300 residues long: ATP-dependent (S)-NAD(P)H-hydrate dehydratase (300 aa).

The region spanning 7–289 is the YjeF C-terminal domain; the sequence is IEARLKSIIP…ESIPSVFDQV (283 aa). Residues Gly107 and 160 to 166 contribute to the (6S)-NADPHX site; that span reads NVMEYRR. Residues 194–198 and 213–222 contribute to the ATP site; these read KGQVD and GSPRRCGGQG. Asp223 lines the (6S)-NADPHX pocket.

This sequence belongs to the NnrD/CARKD family. The cofactor is Mg(2+).

The enzyme catalyses (6S)-NADHX + ATP = ADP + phosphate + NADH + H(+). It carries out the reaction (6S)-NADPHX + ATP = ADP + phosphate + NADPH + H(+). Functionally, catalyzes the dehydration of the S-form of NAD(P)HX at the expense of ATP, which is converted to ADP. Together with NAD(P)HX epimerase, which catalyzes the epimerization of the S- and R-forms, the enzyme allows the repair of both epimers of NAD(P)HX, a damaged form of NAD(P)H that is a result of enzymatic or heat-dependent hydration. This chain is ATP-dependent (S)-NAD(P)H-hydrate dehydratase, found in Entamoeba histolytica (strain ATCC 30459 / HM-1:IMSS / ABRM).